The chain runs to 291 residues: Protease HtpX homolog (291 aa).

2 helical membrane-spanning segments follow: residues 4-24 and 38-58; these read IALF…VASL and LGAL…ISLL. A Zn(2+)-binding site is contributed by His144. Residue Glu145 is part of the active site. His148 serves as a coordination point for Zn(2+). The next 2 helical transmembrane spans lie at 159 to 179 and 199 to 219; these read LIQG…GYAV and VTTI…VAWF. Glu224 contributes to the Zn(2+) binding site.

This sequence belongs to the peptidase M48B family. Zn(2+) is required as a cofactor.

The protein localises to the cell inner membrane. The chain is Protease HtpX homolog from Paracidovorax citrulli (strain AAC00-1) (Acidovorax citrulli).